The following is a 559-amino-acid chain: DDB1- and CUL4-associated factor 10 (559 aa).

Positions 1–119 (MFPFGPHSPG…HGLGAGLGGP (119 aa)) are disordered. S53, S63, S89, and S92 each carry phosphoserine. Low complexity predominate over residues 56 to 86 (RPGAPSLSPAPRSGELGLPGAPESSTASAPG). Residues 87–97 (EPSPPSPPCRR) show a composition bias toward pro residues. The residue at position 134 (R134) is an Omega-N-methylarginine. 4 WD repeats span residues 166-205 (RTHG…HIKT), 209-247 (AHED…TKVC), 251-290 (GHTS…EDGC), and 296-335 (FHTR…KSLE). Residue S349 is modified to Phosphoserine. The segment covering 350-367 (SSDLTTSSSSSGPRVSGS) has biased composition (low complexity). A disordered region spans residues 350–396 (SSDLTTSSSSSGPRVSGSPCHHSDSNSSEKHMSRASQREGVSPRNSL). A compositionally biased stretch (basic and acidic residues) spans 370–381 (HHSDSNSSEKHM). WD repeat units lie at residues 408 to 448 (DHGN…QEGA), 470 to 508 (VGRG…SELV), and 526 to 559 (SHND…QPKF).

This sequence belongs to the WD repeat DCAF10 family. As to quaternary structure, interacts with DDB1.

It participates in protein modification; protein ubiquitination. In terms of biological role, may function as a substrate receptor for CUL4-DDB1 E3 ubiquitin-protein ligase complex. The sequence is that of DDB1- and CUL4-associated factor 10 (DCAF10) from Homo sapiens (Human).